The following is a 260-amino-acid chain: Neuraminyllactose-binding hemagglutinin (260 aa).

The N-terminal stretch at 1–27 (MRANNHFKDFAWKKCLLGASVVALLVG) is a signal peptide. Cysteine 28 is lipidated: N-palmitoyl cysteine. Cysteine 28 carries S-diacylglycerol cysteine lipidation. Residues 134 to 139 (KRTIQK) form an N-acetyl-neuraminyl-alpha(2,3)-lactose binding motif region.

The protein localises to the cell outer membrane. The protein is Neuraminyllactose-binding hemagglutinin (hpaA) of Helicobacter pylori (Campylobacter pylori).